We begin with the raw amino-acid sequence, 227 residues long: Germin-like protein subfamily 3 member 2 (227 aa).

Residues 1–24 (MEANTLFLLKALCLLCFNVCFTLA) form the signal peptide. Cys-34 and Cys-54 are disulfide-bonded. N-linked (GlcNAc...) asparagine glycans are attached at residues Asn-56 and Asn-75. The region spanning 68–213 (SGLKTAGNFT…AFGLSLKQIG (146 aa)) is the Cupin type-1 domain. Positions 115, 117, 122, and 161 each coordinate Mn(2+).

This sequence belongs to the germin family. As to quaternary structure, oligomer (believed to be a pentamer but probably hexamer).

The protein resides in the secreted. The protein localises to the extracellular space. It localises to the apoplast. May play a role in plant defense. Probably has no oxalate oxidase activity even if the active site is conserved. The chain is Germin-like protein subfamily 3 member 2 from Arabidopsis thaliana (Mouse-ear cress).